The chain runs to 261 residues: Succinate dehydrogenase [ubiquinone] iron-sulfur subunit, mitochondrial (261 aa).

The 92-residue stretch at 31 to 122 (FKIYRWNPDT…DVKIYPLPHM (92 aa)) folds into the 2Fe-2S ferredoxin-type domain. Cys82, Cys87, Cys90, and Cys102 together coordinate [2Fe-2S] cluster. The region spanning 164 to 194 (DRKKLDGLYECILCACCSTACPSYWWNNEQY) is the 4Fe-4S ferredoxin-type domain. [4Fe-4S] cluster is bound by residues Cys174, Cys177, and Cys180. Cys184 contributes to the [3Fe-4S] cluster binding site. Trp189 contacts a ubiquinone. Residues Cys231 and Cys237 each contribute to the [3Fe-4S] cluster site. Cys241 provides a ligand contact to [4Fe-4S] cluster.

This sequence belongs to the succinate dehydrogenase/fumarate reductase iron-sulfur protein family. Component of complex II composed of four subunits: a flavoprotein (FP), an iron-sulfur protein (IP), and a cytochrome b composed of a large and a small subunit. [2Fe-2S] cluster is required as a cofactor. [3Fe-4S] cluster serves as cofactor. It depends on [4Fe-4S] cluster as a cofactor.

It localises to the mitochondrion inner membrane. It carries out the reaction a quinone + succinate = fumarate + a quinol. It participates in carbohydrate metabolism; tricarboxylic acid cycle; fumarate from succinate (eukaryal route): step 1/1. In terms of biological role, iron-sulfur protein (IP) subunit of succinate dehydrogenase (SDH) that is involved in complex II of the mitochondrial electron transport chain and is responsible for transferring electrons from succinate to ubiquinone (coenzyme Q). The chain is Succinate dehydrogenase [ubiquinone] iron-sulfur subunit, mitochondrial (SDH2) from Eremothecium gossypii (strain ATCC 10895 / CBS 109.51 / FGSC 9923 / NRRL Y-1056) (Yeast).